A 508-amino-acid polypeptide reads, in one-letter code: Glycerol kinase (508 aa).

Threonine 17 contributes to the ADP binding site. Residues threonine 17, threonine 18, and serine 19 each contribute to the ATP site. Threonine 17 serves as a coordination point for sn-glycerol 3-phosphate. Position 21 (arginine 21) interacts with ADP. 4 residues coordinate sn-glycerol 3-phosphate: arginine 87, glutamate 88, tyrosine 139, and aspartate 256. Residues arginine 87, glutamate 88, tyrosine 139, aspartate 256, and glutamine 257 each coordinate glycerol. ADP is bound by residues threonine 278 and glycine 322. ATP contacts are provided by threonine 278, glycine 322, glutamine 326, and alanine 423. ADP is bound by residues alanine 423 and asparagine 427.

Belongs to the FGGY kinase family.

It carries out the reaction glycerol + ATP = sn-glycerol 3-phosphate + ADP + H(+). It functions in the pathway polyol metabolism; glycerol degradation via glycerol kinase pathway; sn-glycerol 3-phosphate from glycerol: step 1/1. Its activity is regulated as follows. Inhibited by fructose 1,6-bisphosphate (FBP). In terms of biological role, key enzyme in the regulation of glycerol uptake and metabolism. Catalyzes the phosphorylation of glycerol to yield sn-glycerol 3-phosphate. The polypeptide is Glycerol kinase (Corynebacterium efficiens (strain DSM 44549 / YS-314 / AJ 12310 / JCM 11189 / NBRC 100395)).